An 808-amino-acid polypeptide reads, in one-letter code: Phospholipase D alpha 1 (808 aa).

The 125-residue stretch at 1 to 125 (MAQILLHGTL…LEGEEIDKWV (125 aa)) folds into the C2 domain. D186 is a binding site for Ca(2+). The PLD phosphodiesterase 1 domain maps to 326-364 (TMFTHHQKIVVVDSELPSGESEKRRILSFVGGIDLCDGR). Active-site residues include H331, K333, and D338. H331 lines the a 1,2-diacyl-sn-glycero-3-phosphate pocket. H370 and H404 together coordinate Ca(2+). A 1,2-diacyl-sn-glycero-3-phosphate-binding residues include Q520 and H659. In terms of domain architecture, PLD phosphodiesterase 2 spans 654–681 (FMIYVHSKMMIVDDEYIIVGSANINQRS). Catalysis depends on residues H659, K661, and D666. E720 serves as a coordination point for Ca(2+).

It belongs to the phospholipase D family. C2-PLD subfamily. It depends on Ca(2+) as a cofactor.

The catalysed reaction is a 1,2-diacyl-sn-glycero-3-phosphocholine + H2O = a 1,2-diacyl-sn-glycero-3-phosphate + choline + H(+). In terms of biological role, hydrolyzes glycerol-phospholipids at the terminal phosphodiesteric bond. Plays an important role in various cellular processes. The chain is Phospholipase D alpha 1 (PLD1) from Nicotiana tabacum (Common tobacco).